We begin with the raw amino-acid sequence, 351 residues long: Peptide chain release factor 1 (351 aa).

N5-methylglutamine is present on Q229.

It belongs to the prokaryotic/mitochondrial release factor family. Methylated by PrmC. Methylation increases the termination efficiency of RF1.

The protein resides in the cytoplasm. In terms of biological role, peptide chain release factor 1 directs the termination of translation in response to the peptide chain termination codons UAG and UAA. This chain is Peptide chain release factor 1, found in Dinoroseobacter shibae (strain DSM 16493 / NCIMB 14021 / DFL 12).